The primary structure comprises 307 residues: Protoheme IX farnesyltransferase (307 aa).

8 helical membrane-spanning segments follow: residues 38-58 (NTLTVFTGFWLALHFNGLSVL), 65-85 (FFTIVGSGLVMAGVCCLNNYI), 108-128 (PGFALTFGLVILLLGFVFLLL), 131-151 (PMAVLMGFIGAFTYVVLYSLW), 158-178 (LNTVVGSISGAVPPLIGWAAI), 186-206 (IAWMLFLIMFIWQIPHFLALA), 251-271 (LGITFMVIATLLNIGWIVLGF), and 287-307 (FVYSLNYLTILFVSMIVVTFF).

This sequence belongs to the UbiA prenyltransferase family. Protoheme IX farnesyltransferase subfamily. Interacts with CtaA.

Its subcellular location is the cell membrane. It carries out the reaction heme b + (2E,6E)-farnesyl diphosphate + H2O = Fe(II)-heme o + diphosphate. The protein operates within porphyrin-containing compound metabolism; heme O biosynthesis; heme O from protoheme: step 1/1. In terms of biological role, converts heme B (protoheme IX) to heme O by substitution of the vinyl group on carbon 2 of heme B porphyrin ring with a hydroxyethyl farnesyl side group. This chain is Protoheme IX farnesyltransferase, found in Bacillus thuringiensis (strain Al Hakam).